The chain runs to 147 residues: MVQATLRLESQWPASPAFGWALAPLEVSVLLSDDEAVQALNAQYRGKDKPTNILSFAMEEEADDAMPMPIMAGEPRLLGDLILAYQTVQREAAEQDKPFDQHLTHLLVHGTLHLLGYDHERSEDEAQQQEAREIAILAQLGLPNPYL.

Positions 109, 113, and 119 each coordinate Zn(2+).

Belongs to the endoribonuclease YbeY family. Zn(2+) is required as a cofactor.

It localises to the cytoplasm. Single strand-specific metallo-endoribonuclease involved in late-stage 70S ribosome quality control and in maturation of the 3' terminus of the 16S rRNA. The polypeptide is Endoribonuclease YbeY (Magnetococcus marinus (strain ATCC BAA-1437 / JCM 17883 / MC-1)).